We begin with the raw amino-acid sequence, 591 residues long: V-type ATP synthase alpha chain (591 aa).

233-240 contacts ATP; that stretch reads GPFGAGKT.

Belongs to the ATPase alpha/beta chains family.

It carries out the reaction ATP + H2O + 4 H(+)(in) = ADP + phosphate + 5 H(+)(out). In terms of biological role, produces ATP from ADP in the presence of a proton gradient across the membrane. The V-type alpha chain is a catalytic subunit. This Streptococcus pyogenes serotype M3 (strain ATCC BAA-595 / MGAS315) protein is V-type ATP synthase alpha chain.